The chain runs to 212 residues: Phosphatidylserine decarboxylase proenzyme (212 aa).

Serine 182 functions as the Schiff-base intermediate with substrate; via pyruvic acid in the catalytic mechanism. Serine 182 carries the post-translational modification Pyruvic acid (Ser); by autocatalysis.

Belongs to the phosphatidylserine decarboxylase family. PSD-A subfamily. As to quaternary structure, heterodimer of a large membrane-associated beta subunit and a small pyruvoyl-containing alpha subunit. It depends on pyruvate as a cofactor. Post-translationally, is synthesized initially as an inactive proenzyme. Formation of the active enzyme involves a self-maturation process in which the active site pyruvoyl group is generated from an internal serine residue via an autocatalytic post-translational modification. Two non-identical subunits are generated from the proenzyme in this reaction, and the pyruvate is formed at the N-terminus of the alpha chain, which is derived from the carboxyl end of the proenzyme. The post-translation cleavage follows an unusual pathway, termed non-hydrolytic serinolysis, in which the side chain hydroxyl group of the serine supplies its oxygen atom to form the C-terminus of the beta chain, while the remainder of the serine residue undergoes an oxidative deamination to produce ammonia and the pyruvoyl prosthetic group on the alpha chain.

The protein resides in the cell membrane. It catalyses the reaction a 1,2-diacyl-sn-glycero-3-phospho-L-serine + H(+) = a 1,2-diacyl-sn-glycero-3-phosphoethanolamine + CO2. Its pathway is phospholipid metabolism; phosphatidylethanolamine biosynthesis; phosphatidylethanolamine from CDP-diacylglycerol: step 2/2. In terms of biological role, catalyzes the formation of phosphatidylethanolamine (PtdEtn) from phosphatidylserine (PtdSer). The sequence is that of Phosphatidylserine decarboxylase proenzyme from Paraburkholderia phymatum (strain DSM 17167 / CIP 108236 / LMG 21445 / STM815) (Burkholderia phymatum).